The primary structure comprises 905 residues: Clumping factor B (905 aa).

An N-terminal signal peptide occupies residues 1-44 (MKKRIDYLSNKQNKYSIRRFTVGTTSVIVGATILFGIGNHQAQA). The short motif at 15–26 (YSIRRFTVGTTS) is the YSIRK-G/S signaling motif element. Polar residues-rich tracts occupy residues 44 to 61 (ASEQ…NASA) and 68 to 101 (MIET…KPMS). The tract at residues 44-191 (ASEQSNDTTQ…AQGTSKPSVR (148 aa)) is disordered. The ligand binding A region stretch occupies residues 45 to 542 (SEQSNDTTQS…GSADGDSAVN (498 aa)). Over residues 102 to 119 (TQTSNTTTTEPASTNETP) the composition is skewed to low complexity. Polar residues predominate over residues 134–189 (QDQTVPQEANSQVDNKTTNDANSIATNSELKNPQTLDLPQSSPQTISNAQGTSKPS). Residues 272–276 (DYSNS) carry the MIDAS-like motif motif. The interval 530 to 877 (YGGGSADGDS…ETGDKSENTN (348 aa)) is disordered. The span at 545 to 555 (DPTPGPPVDPE) shows a compositional bias: pro residues. Over residues 556-829 (PSPDPEPEPS…SDSDSDSDSD (274 aa)) the composition is skewed to acidic residues. Residues 833–844 (RVTPPNNEQKAP) show a composition bias toward polar residues. Residues 861-874 (HKTDALPETGDKSE) show a composition bias toward basic and acidic residues. The short motif at 866-870 (LPETG) is the LPXTG sorting signal element. Residue T869 is modified to Pentaglycyl murein peptidoglycan amidated threonine. The propeptide at 870–905 (GDKSENTNATLFGAMMALLGSLLLFRKRKQDHKEKA) is removed by sortase.

Belongs to the serine-aspartate repeat-containing protein (SDr) family. In terms of processing, proteolytically cleaved by aureolysin (aur). This cleavage leads to the inactivation of ClfB.

It localises to the secreted. The protein resides in the cell wall. Cell surface-associated protein implicated in virulence by promoting bacterial attachment to both alpha- and beta-chains of human fibrinogen and inducing the formation of bacterial clumps. The sequence is that of Clumping factor B (clfB) from Staphylococcus aureus (strain MSSA476).